We begin with the raw amino-acid sequence, 1024 residues long: Myosin phosphatase Rho-interacting protein (1024 aa).

The interaction with F-actin stretch occupies residues 1–382 (MSAAKENPCR…DRRSTESSMT (382 aa)). The region spanning 43 to 150 (KPIYGGWLLL…WLEMLMVYPR (108 aa)) is the PH 1 domain. A disordered region spans residues 152–262 (NKQNQKKKRK…GDRVDGGRKV (111 aa)). Residues 179-190 (SSSGGSSGSSSS) are compositionally biased toward low complexity. A phosphoserine mark is found at serine 193, serine 219, serine 221, serine 225, and serine 227. A compositionally biased stretch (low complexity) spans 221 to 233 (SPAQSPSQSQPPA). Residues 240–262 (PGLESKEDESTISGDRVDGGRKV) are compositionally biased toward basic and acidic residues. Phosphoserine is present on residues serine 266, serine 270, serine 289, and serine 292. 2 disordered regions span residues 274–301 (AKQDLRAEEQLPPLLSPPSPSTPHSRRS) and 328–379 (PSSD…STES). Phosphothreonine is present on threonine 295. Over residues 333-349 (RQGRSERRAIPRKRDFA) the composition is skewed to basic and acidic residues. Residue serine 364 is modified to Phosphoserine. The PH 2 domain occupies 386–482 (LNFKKGWLTK…WIQTIMKHVL (97 aa)). The disordered stretch occupies residues 486–583 (APDVTSSLPE…AEPGELERER (98 aa)). Residues 488 to 508 (DVTSSLPEGKNKSTSFETCSR) are compositionally biased toward polar residues. Serine 492 carries the phosphoserine modification. The span at 522 to 545 (PEQKKSRARERRREGRSKTFDWAE) shows a compositional bias: basic and acidic residues. An interaction with RHOA region spans residues 545–823 (EFRPIQQALA…SVQRELEVLS (279 aa)). Residue serine 617 is modified to Phosphoserine. Threonine 645 is subject to Phosphothreonine. Positions 672-976 (HELTSLLEKE…AATEALGEKS (305 aa)) form a coiled coil. Serine 799 is modified (phosphoserine). Residues 823-878 (SEQYSQKCLENAHLAQALEAERQALRQCQRENQELNAHNQELNNRLAAEITRLRTL) form an interaction with PPP1R12A region. Positions 972–995 (LGEKSPEGTTVSGYDIMKSKSNPD) are disordered. Serine 976, glycine 979, serine 992, serine 1013, and serine 1015 each carry phosphoserine.

In terms of assembly, binds RHOA, PPP1R12A/MBS and PPP1R12C/MBS85 through adjacent coiled coil domains. Interacts with MYZAP. Binds F-actin through its N-terminus. As to expression, expressed in Kidney, Brain, Heart and Lung.

Its subcellular location is the cytoplasm. The protein resides in the cytoskeleton. Targets myosin phosphatase to the actin cytoskeleton. Required for the regulation of the actin cytoskeleton by RhoA and ROCK1. Depletion leads to an increased number of stress fibers in smooth muscle cells through stabilization of actin fibers by phosphorylated myosin. Overexpression of MRIP as well as its F-actin-binding region leads to disassembly of stress fibers in neuronal cells. The chain is Myosin phosphatase Rho-interacting protein (Mprip) from Mus musculus (Mouse).